Consider the following 181-residue polypeptide: Germinal center-associated signaling and motility protein (181 aa).

Serine 102 is modified (phosphoserine). Positions alanine 117–glutamate 128 are enriched in basic and acidic residues. The disordered stretch occupies residues alanine 117–glutamine 181. Position 150 is a phosphotyrosine (tyrosine 150).

Interacts with ACTB and MYH2; the interaction with MYH2 is increased by IL6-induced phosphorylation. Interacts (via C-terminus) with ARHGEF11 (via DH domain). Interacts with ARHGEF12. Interacts with SYK; the interaction increases after B-cell receptor stimulation, resulting in enhanced SYK autophosphorylation and activity. Post-translationally, phosphorylation on tyrosine residues can be induced by IL6. Phosphorylation is mediated by LYN. Targeted by the ubiquitin E3 ligase subunit FBXO10 to mediate its ubiquitination and degradation. As to expression, highly expressed in normal germinal center (GC) B-cells. Expressed in spleen and, to a lesser extent, bone marrow.

The protein resides in the cytoplasm. Its subcellular location is the cell membrane. Its function is as follows. Involved in the negative regulation of lymphocyte motility. It mediates the migration-inhibitory effects of IL6. Serves as a positive regulator of the RhoA signaling pathway. Enhancement of RhoA activation results in inhibition of lymphocyte and lymphoma cell motility by activation of its downstream effector ROCK. Is a regulator of B-cell receptor signaling, that acts through SYK kinase activation. This Mus musculus (Mouse) protein is Germinal center-associated signaling and motility protein (Gcsam).